A 354-amino-acid chain; its full sequence is Tryptophan--tRNA ligase (354 aa).

ATP is bound by residues Gln13–Thr15 and Gly21–Asn22. A 'HIGH' region motif is present at residues Pro14–Asn22. Asp137 contacts L-tryptophan. ATP contacts are provided by residues Gly149–Asp151, Val208, and Lys217–Ser221. A 'KMSKS' region motif is present at residues Lys217–Ser221.

This sequence belongs to the class-I aminoacyl-tRNA synthetase family. As to quaternary structure, homodimer.

The protein resides in the cytoplasm. The enzyme catalyses tRNA(Trp) + L-tryptophan + ATP = L-tryptophyl-tRNA(Trp) + AMP + diphosphate + H(+). Catalyzes the attachment of tryptophan to tRNA(Trp). The chain is Tryptophan--tRNA ligase from Rhizobium meliloti (strain 1021) (Ensifer meliloti).